The sequence spans 360 residues: Peptide chain release factor 1 (360 aa).

Gln-237 bears the N5-methylglutamine mark.

It belongs to the prokaryotic/mitochondrial release factor family. Methylated by PrmC. Methylation increases the termination efficiency of RF1.

The protein localises to the cytoplasm. In terms of biological role, peptide chain release factor 1 directs the termination of translation in response to the peptide chain termination codons UAG and UAA. The polypeptide is Peptide chain release factor 1 (Ectopseudomonas mendocina (strain ymp) (Pseudomonas mendocina)).